A 351-amino-acid chain; its full sequence is MQNLAPASEGQRLRRILDANLDRAREGLRVIEEWCRFGREDAALSAECKDLRQTLGRYHTEELRAARQTDQDPGTALSHPQERDRPTLNAVLTANFARVQEALRVIEEYGKLTDTELSETAKALRYRVYILEQALTLNPLQARLRQLQGAKLYLVTAPSDRLLEIVEAALKGGLPLVQYRDKTSDDHTRLTTARQLQALCQRYGALFLVNDRVDIALGANADGVHLGQMDIPMELARQILGRDRLVGRSTTNAQELERAIAEGADYVGVGPIFATPTKPGKAAVGFDYLQYARKHAPMPQFAIGGIDLSNIEEVIKAGATQVAVVRAIMAAADPEATTRELLRRLSQGEPS.

The segment at 1 to 127 is unknown; sequence MQNLAPASEG…SETAKALRYR (127 aa). Positions 64 to 84 are disordered; the sequence is RAARQTDQDPGTALSHPQERD. A thiamine-phosphate synthase region spans residues 128–351; that stretch reads VYILEQALTL…LRRLSQGEPS (224 aa). 4-amino-2-methyl-5-(diphosphooxymethyl)pyrimidine is bound by residues 178–182 and asparagine 210; that span reads QYRDK. Mg(2+)-binding residues include aspartate 211 and aspartate 230. Serine 249 serves as a coordination point for 4-amino-2-methyl-5-(diphosphooxymethyl)pyrimidine. Residue 275–277 participates in 2-[(2R,5Z)-2-carboxy-4-methylthiazol-5(2H)-ylidene]ethyl phosphate binding; that stretch reads TPT. Lysine 278 is a binding site for 4-amino-2-methyl-5-(diphosphooxymethyl)pyrimidine. A 2-[(2R,5Z)-2-carboxy-4-methylthiazol-5(2H)-ylidene]ethyl phosphate-binding site is contributed by glycine 305.

Belongs to the thiamine-phosphate synthase family. Mg(2+) is required as a cofactor.

The enzyme catalyses 2-[(2R,5Z)-2-carboxy-4-methylthiazol-5(2H)-ylidene]ethyl phosphate + 4-amino-2-methyl-5-(diphosphooxymethyl)pyrimidine + 2 H(+) = thiamine phosphate + CO2 + diphosphate. It catalyses the reaction 2-(2-carboxy-4-methylthiazol-5-yl)ethyl phosphate + 4-amino-2-methyl-5-(diphosphooxymethyl)pyrimidine + 2 H(+) = thiamine phosphate + CO2 + diphosphate. It carries out the reaction 4-methyl-5-(2-phosphooxyethyl)-thiazole + 4-amino-2-methyl-5-(diphosphooxymethyl)pyrimidine + H(+) = thiamine phosphate + diphosphate. Its pathway is cofactor biosynthesis; thiamine diphosphate biosynthesis; thiamine phosphate from 4-amino-2-methyl-5-diphosphomethylpyrimidine and 4-methyl-5-(2-phosphoethyl)-thiazole: step 1/1. Its function is as follows. Condenses 4-methyl-5-(beta-hydroxyethyl)thiazole monophosphate (THZ-P) and 2-methyl-4-amino-5-hydroxymethyl pyrimidine pyrophosphate (HMP-PP) to form thiamine monophosphate (TMP). In Thermosynechococcus vestitus (strain NIES-2133 / IAM M-273 / BP-1), this protein is Thiamine-phosphate synthase.